The sequence spans 126 residues: MSAPNPKAFPLADATLTNQILDLIQQASHYKQLKKGANEATKTLNRGICEFIVMAADVEPIEIVLHLPLLCEDKNVPYVFVPSKTALGRACGVSRPVVSASVTTNEARELQSQIQTVKLAIERLLI.

The protein belongs to the eukaryotic ribosomal protein eL8 family. As to quaternary structure, component of the U3 snoRNP particle. Binds to the C'/D and B/C motifs in U3 snoRNA. Component of the 25S U4/U6.U5 tri-snRNP particle, a subcomplex of the spliceosome. Binds to the 5' stem-loop of U4 snRNA.

The protein localises to the nucleus. The protein resides in the nucleolus. Common component of the spliceosome and rRNA processing machinery. In association with the spliceosomal U4/U6.U5 tri-snRNP particle, required for splicing of pre-mRNA. In association with box C/D snoRNPs, required for processing of pre-ribosomal RNA (rRNA) and site-specific 2'-O-methylation of substrate RNAs. Essential for the accumulation and stability of U4 snRNA, U6 snRNA, and box C/D snoRNAs. This Mycosarcoma maydis (Corn smut fungus) protein is 13 kDa ribonucleoprotein-associated protein (SNU13).